The sequence spans 125 residues: MSFLRPTLALLAVTALVTTSAQLNGYSKKEVTPEDTELLQKAQSNVSAYNSDVTSRICYLKVDSLETQVVSGENYKFHVSGCSVNSDKELGGCANQNCESSKYDIVIYSQSWTNTLKVTSITPAN.

A signal peptide spans 1–21; sequence MSFLRPTLALLAVTALVTTSA. A glycan (N-linked (GlcNAc...) asparagine) is linked at N45. The short motif at 68 to 72 is the Secondary area of contact element; the sequence is QVVSG.

It belongs to the cystatin family. As to quaternary structure, interacts with the host papain-like cysteine protease PIP1. Interacts with the host papain-like cysteine protease RCR3. Interacts with the host papain-like cysteine protease C14.

It is found in the secreted. Secreted effector that interacts with and inhibits the pathogenesis-related papain-like cysteine proteases C14, PIP1 and RCR3 of host plants. Inhibition of host proteases by a pathogen extracellular protease inhibitor forms a specific type of defense-counterdefense mechanism between plants and microbial pathogens. This Phytophthora infestans (strain T30-4) (Potato late blight agent) protein is Cystatin-like cysteine protease inhibitor EPIC2B.